A 173-amino-acid chain; its full sequence is SKP1-like protein 1 (173 aa).

Residues Ile115 to Glu173 form an interaction with the F-box domain of F-box proteins region.

The protein belongs to the SKP1 family. Part of a SCF (SKP1-CUL1-F-box protein) E3 ubiquitin-protein ligase complex. Interacts directly with MOF (via F-box domain). Interacts with rice black streaked dwarf virus RBSDV protein P7-2. Is able to form the SCF complex together with CUL1 and the viral P7-2 protein. Interacts with D3.

It localises to the nucleus. The protein operates within protein modification; protein ubiquitination. Functionally, involved in ubiquitination and subsequent proteasomal degradation of target proteins. Together with CUL1, a RING-box and a F-box protein, it forms a SCF E3 ubiquitin ligase complex. The functional specificity of this complex depends on the type of F-box protein. In the SCF complex, it serves as an adapter that links the F-box protein to CUL1. This Oryza sativa subsp. japonica (Rice) protein is SKP1-like protein 1.